Here is a 227-residue protein sequence, read N- to C-terminus: PKHD-type hydroxylase ACIAD0531 (227 aa).

A Fe2OG dioxygenase domain is found at 78–178 (HIIPPLFNRY…RFASFFWVQS (101 aa)). Positions 96, 98, and 159 each coordinate Fe cation. 2-oxoglutarate is bound at residue Arg-169.

It depends on Fe(2+) as a cofactor. L-ascorbate serves as cofactor.

The chain is PKHD-type hydroxylase ACIAD0531 from Acinetobacter baylyi (strain ATCC 33305 / BD413 / ADP1).